Reading from the N-terminus, the 500-residue chain is Glycerol kinase (500 aa).

Thr13 is a binding site for ADP. Thr13, Thr14, and Ser15 together coordinate ATP. Thr13 is a binding site for sn-glycerol 3-phosphate. Position 17 (Arg17) interacts with ADP. Arg83, Glu84, Tyr135, and Asp244 together coordinate sn-glycerol 3-phosphate. Glycerol contacts are provided by Arg83, Glu84, Tyr135, Asp244, and Gln245. Residues Thr266 and Gly309 each contribute to the ADP site. Positions 266, 309, 313, and 410 each coordinate ATP. ADP contacts are provided by Gly410 and Asn414.

This sequence belongs to the FGGY kinase family.

The enzyme catalyses glycerol + ATP = sn-glycerol 3-phosphate + ADP + H(+). It participates in polyol metabolism; glycerol degradation via glycerol kinase pathway; sn-glycerol 3-phosphate from glycerol: step 1/1. With respect to regulation, inhibited by fructose 1,6-bisphosphate (FBP). Key enzyme in the regulation of glycerol uptake and metabolism. Catalyzes the phosphorylation of glycerol to yield sn-glycerol 3-phosphate. The sequence is that of Glycerol kinase from Burkholderia cenocepacia (strain HI2424).